The sequence spans 176 residues: Neuropeptide-like protein 1 (176 aa).

A signal peptide spans methionine 1–alanine 19. The segment at glycine 59–lysine 79 is disordered. Residues arginine 61 to lysine 79 are compositionally biased toward basic and acidic residues.

In AWC olfactory sensory neurons, required for the detection of preferred food sources. The polypeptide is Neuropeptide-like protein 1 (nlp-1) (Caenorhabditis elegans).